A 79-amino-acid chain; its full sequence is D-alanyl carrier protein (79 aa).

One can recognise a Carrier domain in the interval 1–77 (MSTKETVIDL…KIIQGIEELQ (77 aa)). The residue at position 35 (S35) is an O-(pantetheine 4'-phosphoryl)serine.

Belongs to the DltC family. Post-translationally, 4'-phosphopantetheine is transferred from CoA to a specific serine of apo-DCP.

The protein localises to the cytoplasm. Its pathway is cell wall biogenesis; lipoteichoic acid biosynthesis. Carrier protein involved in the D-alanylation of lipoteichoic acid (LTA). The loading of thioester-linked D-alanine onto DltC is catalyzed by D-alanine--D-alanyl carrier protein ligase DltA. The DltC-carried D-alanyl group is further transferred to cell membrane phosphatidylglycerol (PG) by forming an ester bond, probably catalyzed by DltD. D-alanylation of LTA plays an important role in modulating the properties of the cell wall in Gram-positive bacteria, influencing the net charge of the cell wall. The protein is D-alanyl carrier protein of Streptococcus equi subsp. equi (strain 4047).